We begin with the raw amino-acid sequence, 554 residues long: Tetratricopeptide repeat protein 34 (554 aa).

TPR repeat units follow at residues 38–71 (ETSCLLAADALYRLGRLDDAHKSLLVALSQRPQA), 166–199 (SESLLVRARCYGLLGQKKTAMFDFNAILREEPGN), 200–233 (VKALCGRALVHLALDQLQEAVDDMVSALKLDPGT), 294–327 (PSWRLLLTDILTGLGKYQEAGTHLQEALHLTPSS), 328–361 (EAAQARQGLLQLKKGDVSAAVHGLQCLAERDTQD), 411–445 (NPYHLRLRVACLTQLQEYDRALRDLDRVLQHPAED), 452–485 (SEDFCTRGRLLLSLGDKDGAAGAFTQALALAPAQ), and 500–533 (ASVFLIHGQRCLEEEHFEEAWTAVQNGLLVDPSH).

This Mus musculus (Mouse) protein is Tetratricopeptide repeat protein 34 (Ttc34).